The sequence spans 215 residues: S-crystallin 2 (215 aa).

A GST N-terminal domain is found at 2-80; it reads PSYTLHYFNH…YLAREFGFHG (79 aa). The GST C-terminal domain occupies 82 to 215; it reads NNLDMARVDF…YLKSRSSTDF (134 aa).

Belongs to the GST superfamily. Lens.

In terms of biological role, S-crystallins are structural components of squids and octopi eye lens. Contains relatively little GST activity (1/1000 of that of mammalian GST enzyme). This is S-crystallin 2 (OCTS2) from Octopus vulgaris (Common octopus).